Here is a 1841-residue protein sequence, read N- to C-terminus: Sucrase-isomaltase, intestinal (1841 aa).

Over 1–12 (MAKKKFSALEIS) the chain is Cytoplasmic. Phosphoserine; by PKA is present on S7. Residues 13-32 (LIVLFIIVTAIAIALVTVLA) form a helical; Signal-anchor for type II membrane protein membrane-spanning segment. Topologically, residues 33 to 1841 (TKVPAVEEIK…LDEPIQITWS (1809 aa)) are lumenal. A disordered region spans residues 42–81 (KSPTPTSNSTPTSTPTSTSTPTSTSTPSPGKCPPEQGEPI). The segment covering 43 to 70 (SPTPTSNSTPTSTPTSTSTPTSTSTPSP) has biased composition (low complexity). The 50-residue stretch at 71–120 (GKCPPEQGEPINERINCIPEQHPTKAICEERGCCWRPWNNTVIPWCFFAD) folds into the P-type 1 domain. Intrachain disulfides connect C73-C104, C87-C103, and C98-C116. An N-linked (GlcNAc...) asparagine glycan is attached at N109. The tract at residues 120–1013 (DNHGYNAESI…ELQLNPPNAR (894 aa)) is isomaltase. 2 residues coordinate substrate: D274 and D398. A sulfotyrosine mark is found at Y401 and Y410. The N-linked (GlcNAc...) asparagine glycan is linked to N464. D514 serves as the catalytic Nucleophile; for isomaltase activity. Position 599 (R599) interacts with substrate. The For isomaltase activity role is filled by D615. C646 and C657 form a disulfide bridge. H673 contributes to the substrate binding site. Residues N758, N765, N867, and N910 are each glycosylated (N-linked (GlcNAc...) asparagine). Residues 936–984 (RWCRTFSDNEKFTCYPDVGTATEGTCTQRGCLWQPVSGLSNVPPYYFPP) enclose the P-type 2 domain. The segment at 1014 to 1841 (IKLPSNPIST…LDEPIQITWS (828 aa)) is sucrase. Residues N1240, N1308, N1345, N1359, and N1373 are each glycosylated (N-linked (GlcNAc...) asparagine). Y1387 is modified (sulfotyrosine). The active-site Nucleophile; for sucrase activity is the D1399. E1402 serves as the catalytic For sucrase activity. Residue N1485 is glycosylated (N-linked (GlcNAc...) asparagine). Catalysis depends on D1512, which acts as the Proton donor; for sucrase activity. N-linked (GlcNAc...) asparagine glycans are attached at residues N1513, N1575, N1762, and N1829.

This sequence belongs to the glycosyl hydrolase 31 family. The resulting sucrase and isomaltase subunits stay associated with one another in a complex by non-covalent linkages. In terms of processing, the precursor is proteolytically cleaved when exposed to pancreatic proteases in the intestinal lumen. Post-translationally, sulfated.

Its subcellular location is the apical cell membrane. The catalysed reaction is Hydrolysis of sucrose and maltose by an alpha-D-glucosidase-type action.. It carries out the reaction Hydrolysis of (1-&gt;6)-alpha-D-glucosidic linkages in some oligosaccharides produced from starch and glycogen by alpha-amylase, and in isomaltose.. Functionally, plays an important role in the final stage of carbohydrate digestion. Isomaltase activity is specific for both alpha-1,4- and alpha-1,6-oligosaccharides. This is Sucrase-isomaltase, intestinal (Si) from Rattus norvegicus (Rat).